We begin with the raw amino-acid sequence, 338 residues long: Glyceraldehyde-3-phosphate dehydrogenase 2 (338 aa).

NAD(+) is bound by residues 12 to 13 (RI), Asp-34, and Arg-79. D-glyceraldehyde 3-phosphate-binding positions include 150–152 (SCT), Thr-181, 210–211 (TG), and Arg-233. The active-site Nucleophile is Cys-151. Asn-315 is a binding site for NAD(+).

It belongs to the glyceraldehyde-3-phosphate dehydrogenase family. As to quaternary structure, homotetramer.

It is found in the cytoplasm. The enzyme catalyses D-glyceraldehyde 3-phosphate + phosphate + NAD(+) = (2R)-3-phospho-glyceroyl phosphate + NADH + H(+). Its pathway is carbohydrate degradation; glycolysis; pyruvate from D-glyceraldehyde 3-phosphate: step 1/5. This Mucor circinelloides f. lusitanicus (Mucor racemosus var. lusitanicus) protein is Glyceraldehyde-3-phosphate dehydrogenase 2 (GPD2).